A 365-amino-acid chain; its full sequence is Probable cinnamyl alcohol dehydrogenase (365 aa).

C47 contacts Zn(2+). Position 49 (T49) interacts with NADP(+). Positions 69, 70, 100, 103, 106, 114, and 163 each coordinate Zn(2+). NADP(+)-binding positions include T167, 188-193 (GLGGVG), 211-216 (SSSSKK), T251, G275, and 298-300 (SFI).

This sequence belongs to the zinc-containing alcohol dehydrogenase family. As to quaternary structure, homodimer. The cofactor is Zn(2+).

It catalyses the reaction (E)-cinnamyl alcohol + NADP(+) = (E)-cinnamaldehyde + NADPH + H(+). It carries out the reaction (E)-coniferol + NADP(+) = (E)-coniferaldehyde + NADPH + H(+). The catalysed reaction is (E)-sinapyl alcohol + NADP(+) = (E)-sinapaldehyde + NADPH + H(+). The enzyme catalyses (E)-4-coumaroyl alcohol + NADP(+) = (E)-4-coumaraldehyde + NADPH + H(+). It catalyses the reaction (E)-caffeyl alcohol + NADP(+) = (E)-caffeyl aldehyde + NADPH + H(+). It participates in aromatic compound metabolism; phenylpropanoid biosynthesis. Involved in lignin biosynthesis. Catalyzes the final step specific for the production of lignin monomers. Catalyzes the NADPH-dependent reduction of coniferaldehyde, 5-hydroxyconiferaldehyde, sinapaldehyde, 4-coumaraldehyde and caffeyl aldehyde to their respective alcohols. This chain is Probable cinnamyl alcohol dehydrogenase (CAD), found in Saccharum officinarum (Sugarcane).